The chain runs to 289 residues: Phospholipase A1 (289 aa).

The signal sequence occupies residues 1 to 20; it reads MRTLQGWLLPVFMLPMAVYA. Residues 21–52 lie on the Periplasmic side of the membrane; the sequence is QEATVKEVHDAPAVRGSIIANMLQEHDNPFTL. A beta stranded membrane pass occupies residues 53 to 65; it reads YPYDTNYLIYTQT. The Extracellular segment spans residues 66–84; sequence SDLNKEAIASYDWAENARK. A beta stranded membrane pass occupies residues 85–99; that stretch reads DEVKFQLSLAFPLWR. At 100–105 the chain is on the periplasmic side; sequence GILGPN. A beta stranded transmembrane segment spans residues 106–118; the sequence is SVLGASYTQKSWW. Residues 119–128 lie on the Extracellular side of the membrane; the sequence is QLSNSEESSP. Serine 126 contributes to the Ca(2+) binding site. A beta stranded membrane pass occupies residues 129–148; it reads FRETNYEPQLFLGFATDYRF. Residues 149 to 150 are Periplasmic-facing; it reads AG. The beta stranded transmembrane segment at 151–164 threads the bilayer; it reads WTLRDVEMGYNHDS. Histidine 162 functions as the Proton acceptor in the catalytic mechanism. The active-site Nucleophile is serine 164. Topologically, residues 165 to 173 are extracellular; it reads NGRSDPTSR. Ca(2+) contacts are provided by arginine 167 and serine 172. The chain crosses the membrane as a beta stranded span at residues 174 to 186; that stretch reads SWNRLYTRLMAEN. The Periplasmic portion of the chain corresponds to 187 to 188; the sequence is GN. Residues 189–198 traverse the membrane as a beta stranded segment; the sequence is WLVEVKPWYV. The Extracellular segment spans residues 199 to 216; that stretch reads VGNTDDNPDITKYMGYYQ. Residue aspartate 204 participates in Ca(2+) binding. Residues 217-223 traverse the membrane as a beta stranded segment; that stretch reads LKIGYHL. The Periplasmic portion of the chain corresponds to 224–225; sequence GD. The beta stranded transmembrane segment at 226–234 threads the bilayer; that stretch reads AVLSAKGQY. Over 235 to 241 the chain is Extracellular; sequence NWNTGYG. The chain crosses the membrane as a beta stranded span at residues 242 to 250; the sequence is GAELGLSYP. The Periplasmic segment spans residues 251 to 255; that stretch reads ITKHV. A beta stranded transmembrane segment spans residues 256 to 265; it reads RLYTQVYSGY. The Extracellular segment spans residues 266-274; that stretch reads GESLIDYNF. The beta stranded transmembrane segment at 275 to 286 threads the bilayer; that stretch reads NQTRVGVGVMLN. At 287-289 the chain is on the periplasmic side; that stretch reads DLF.

Belongs to the phospholipase A1 family. As to quaternary structure, homodimer; dimerization is reversible, and the dimeric form is the active one. Requires Ca(2+) as cofactor.

It localises to the cell outer membrane. The enzyme catalyses a 1,2-diacyl-sn-glycero-3-phosphocholine + H2O = a 2-acyl-sn-glycero-3-phosphocholine + a fatty acid + H(+). The catalysed reaction is a 1,2-diacyl-sn-glycero-3-phosphocholine + H2O = a 1-acyl-sn-glycero-3-phosphocholine + a fatty acid + H(+). Its function is as follows. Hydrolysis of phosphatidylcholine with phospholipase A2 (EC 3.1.1.4) and phospholipase A1 (EC 3.1.1.32) activities. The sequence is that of Phospholipase A1 (pldA) from Escherichia coli O157:H7.